Reading from the N-terminus, the 990-residue chain is Nucleotide-binding leucine-rich repeat (NLR)-like protein (990 aa).

Positions 22 to 304 are purine nucleoside phosphorylase domain; the sequence is GWICAIPTEL…AVAAAYAKIL (283 aa). The region spanning 334–563 is the NB-ARC domain; it reads REEHLRQVLT…TISNYLEVYE (230 aa). TPR repeat units lie at residues 732 to 765, 774 to 807, 816 to 849, 858 to 891, 900 to 933, and 942 to 975; these read RDLL…KKLA, IGSM…MKQV, LGSM…RKQA, LMSM…KQQT, LASM…RKQV, and LQSM…ATLD. Residues 965 to 990 are disordered; sequence QQQQQSQATLDEGRLSKPARKRRKKK. A compositionally biased stretch (basic residues) spans 981-990; sequence KPARKRRKKK.

The enzyme catalyses ATP + H2O = D-ribose 5-triphosphate + adenine. The catalysed reaction is dATP + H2O = 2-deoxyribose 5-triphosphate + adenine. Its function is as follows. The N-terminal purine nucleoside phosphorylase (PNP) domain cleaves the N-glycosidic bond of ATP, and to a lesser extent dATP; has very weak activity on adenosine and deoxyadenosine and no activity on (d)ADP or (d)AMP. The polypeptide is Nucleotide-binding leucine-rich repeat (NLR)-like protein (Hyaloscypha variabilis (strain UAMH 11265 / GT02V1 / F) (Meliniomyces variabilis)).